A 567-amino-acid chain; its full sequence is uncharacterized protein (567 aa).

The next 12 membrane-spanning stretches (helical) occupy residues 136–156 (LFCL…LIFA), 159–179 (FMGI…SDII), 193–213 (LLLG…SEVF), 217–237 (LCFL…FFFV), 258–278 (ILGG…LTFG), 291–311 (LLLL…SITE), 334–354 (FLIG…FQLV), 364–384 (LRLA…GILM), 393–415 (LLFS…HPGI), 426–446 (PANV…IFAF), 457–477 (TLYL…SAVI), and 536–553 (AQQF…LCIL).

This sequence belongs to the major facilitator superfamily.

Its subcellular location is the membrane. This is an uncharacterized protein from Schizosaccharomyces pombe (strain 972 / ATCC 24843) (Fission yeast).